A 739-amino-acid polypeptide reads, in one-letter code: MSEGISLSAEFIDRVKASVKPHWGKLGWVTYKRTYARWLPEKGRSENWDETVKRVVEGNINLDPRLQDSPSLELKQSLTEEAERLYKLIYGLGATPSGRNLWISGTDYQRRTGDSLNNCWFVAIRPQKYGDSKIVPSYLGKQEKAVSMPFSFLFDELMKGGGVGFSVARSNISQIPRVDFAIDLQVVVDESSESYDASVKVGAVGKNEVVQDADSIYYRLPDTREGWVLANALLIDLHFAQTNPDRKQKLILDLSDIRPYGAEIHGFGGTASGPMPLISMLLDINEVLNNKAGGRLTSVDAADICNLIGKAVVAGNVRRSAELALGSNDDQDFISMKQDQEKLMHHRWASNNSVAVDSAFSGYQPIAAGIRENGEPGIVNLDLSKNYGRIVDGYQAGIDGDVEGTNPCGEISLANGEPCNLFEVFPLIAEEQGWDLQEVFALAARYAKRVTFSPYDWEISREIIQKNRRIGISMSGIQDWLLTRLGNRVVTGFKDDFDPETHEAIKVPVYDKRAIKMVDQLYKAVVKADQDYSKTLGCNESIKHTTVKPSGTVAKLAGASEGMHFHYGAYLIQRIRFQNSDPLLPALKACGYRTEADIYTENTTCVEFPVKAVGADNPNFASAGTVSIAEQFATQAFLQTYWSDNAVSCTITFQDSEGDQVESLLRQYRFIIKSTSLLPYFGGSLQQAPKEPIDKETYEKRSQEITGNVEEVFSQLNSDVKDLELVDQTDCEGGACPIK.

Cysteines 119 and 419 form a disulfide. An effector region-1 region spans residues 147 to 158 (SMPFSFLFDELM). Residues 168–313 (ARSNISQIPR…ICNLIGKAVV (146 aa)) form an effector region-2 region. Residues Cys-408 and Glu-410 contribute to the active site. The tract at residues 565–626 (FHYGAYLIQR…NPNFASAGTV (62 aa)) is adenosylcobalamin-binding-1. Positions 685 to 724 (LQQAPKEPIDKETYEKRSQEITGNVEEVFSQLNSDVKDLE) are adenosylcobalamin-binding-2.

It belongs to the class II ribonucleoside-triphosphate reductase family. As to quaternary structure, monomer. Adenosylcob(III)alamin is required as a cofactor.

It carries out the reaction a 2'-deoxyribonucleoside 5'-triphosphate + [thioredoxin]-disulfide + H2O = a ribonucleoside 5'-triphosphate + [thioredoxin]-dithiol. Its activity is regulated as follows. Allosterically regulated by ATP and dNTP. The polypeptide is Adenosylcobalamin-dependent ribonucleoside-triphosphate reductase (rtpR) (Lactobacillus delbrueckii subsp. bulgaricus (strain ATCC BAA-365 / Lb-18)).